The chain runs to 720 residues: DNA gyrase subunit B (720 aa).

Positions 1–26 are enriched in low complexity; that stretch reads MVDAMPENPAEEPTAASAAPNPEAVP. Positions 1 to 42 are disordered; the sequence is MVDAMPENPAEEPTAASAAPNPEAVPDAVGQPEAPVKDRKVP. The region spanning 498–612 is the Toprim domain; sequence CEVYIVEGDS…AGHVFLAQPP (115 aa). Glutamate 504, aspartate 577, and aspartate 579 together coordinate Mg(2+).

The protein belongs to the type II topoisomerase GyrB family. As to quaternary structure, heterotetramer, composed of two GyrA and two GyrB chains. In the heterotetramer, GyrA contains the active site tyrosine that forms a transient covalent intermediate with the DNA, while GyrB binds cofactors and catalyzes ATP hydrolysis. Mg(2+) is required as a cofactor. Requires Mn(2+) as cofactor. It depends on Ca(2+) as a cofactor.

It is found in the cytoplasm. It carries out the reaction ATP-dependent breakage, passage and rejoining of double-stranded DNA.. With respect to regulation, supercoiling activity inhibited by novobiocin and coumermycin, DNA wrapping around gyrase is not inhibited. Its function is as follows. A type II topoisomerase that negatively supercoils DNA in an ATP-dependent manner. About 140 bp of DNA wraps around gyrase in the presence or absence of ATP, when ATP is added negative supercoils are made. Functionally, a type II topoisomerase that negatively supercoils closed circular double-stranded (ds) DNA in an ATP-dependent manner to modulate DNA topology and maintain chromosomes in an underwound state. Negative supercoiling favors strand separation, and DNA replication, transcription, recombination and repair, all of which involve strand separation. Also able to catalyze the interconversion of other topological isomers of dsDNA rings, including catenanes and knotted rings. Type II topoisomerases break and join 2 DNA strands simultaneously in an ATP-dependent manner. This is DNA gyrase subunit B from Micrococcus luteus (strain ATCC 4698 / DSM 20030 / JCM 1464 / CCM 169 / CCUG 5858 / IAM 1056 / NBRC 3333 / NCIMB 9278 / NCTC 2665 / VKM Ac-2230) (Micrococcus lysodeikticus).